A 159-amino-acid chain; its full sequence is Ribosomal RNA large subunit methyltransferase H (159 aa).

S-adenosyl-L-methionine is bound by residues leucine 76, glycine 108, and phenylalanine 127–phenylalanine 132.

It belongs to the RNA methyltransferase RlmH family. In terms of assembly, homodimer.

It is found in the cytoplasm. The enzyme catalyses pseudouridine(1915) in 23S rRNA + S-adenosyl-L-methionine = N(3)-methylpseudouridine(1915) in 23S rRNA + S-adenosyl-L-homocysteine + H(+). In terms of biological role, specifically methylates the pseudouridine at position 1915 (m3Psi1915) in 23S rRNA. This Clostridioides difficile (strain 630) (Peptoclostridium difficile) protein is Ribosomal RNA large subunit methyltransferase H.